The chain runs to 246 residues: E3 ubiquitin ligase TRIM40 (246 aa).

The segment at 12–55 (CPICLDPLKEAVSTDCRHLFCRMCLTQHMDKASVSGILSCPVCR) adopts an RING-type zinc-finger fold. Residues 64–105 (GDNYICHTHQKRVRRFCEASGHLLCEECLQSPEHQSHTELSI) form a B box-type zinc finger. Residues cysteine 69, histidine 72, cysteine 91, and histidine 97 each contribute to the Zn(2+) site. A coiled-coil region spans residues 105 to 170 (IENAISHYKE…DQTKEQLKAL (66 aa)).

The protein belongs to the TRIM/RBCC family. Interacts with NEDD8.

It carries out the reaction S-ubiquitinyl-[E2 ubiquitin-conjugating enzyme]-L-cysteine + [acceptor protein]-L-lysine = [E2 ubiquitin-conjugating enzyme]-L-cysteine + N(6)-ubiquitinyl-[acceptor protein]-L-lysine.. Functionally, E3 ubiquitin-protein ligase that plays a role in the limitation of the innate immune response. Mediates inhibition of the RLR signaling pathway by ubiquitinating RIGI and IFIH1 receptors, leading to their proteasomal degradation. Also promotes the neddylation of IKBKG/NEMO, stabilizing NFKBIA, and thereby inhibiting of NF-kappa-B nuclear translocation and activation. The sequence is that of E3 ubiquitin ligase TRIM40 (Trim40) from Mus musculus (Mouse).